Here is a 366-residue protein sequence, read N- to C-terminus: NADH-quinone oxidoreductase subunit D (366 aa).

Belongs to the complex I 49 kDa subunit family. In terms of assembly, NDH-1 is composed of 14 different subunits. Subunits NuoB, C, D, E, F, and G constitute the peripheral sector of the complex.

It localises to the cell membrane. It carries out the reaction a quinone + NADH + 5 H(+)(in) = a quinol + NAD(+) + 4 H(+)(out). Its function is as follows. NDH-1 shuttles electrons from NADH, via FMN and iron-sulfur (Fe-S) centers, to quinones in the respiratory chain. The immediate electron acceptor for the enzyme in this species is believed to be a menaquinone. Couples the redox reaction to proton translocation (for every two electrons transferred, four hydrogen ions are translocated across the cytoplasmic membrane), and thus conserves the redox energy in a proton gradient. The protein is NADH-quinone oxidoreductase subunit D of Bacillus anthracis.